Here is a 2080-residue protein sequence, read N- to C-terminus: Dysferlin (2080 aa).

The region spanning methionine 1–phenylalanine 101 is the C2 1 domain. Topologically, residues methionine 1–alanine 2046 are cytoplasmic. Ca(2+) contacts are provided by aspartate 18, isoleucine 19, aspartate 21, and asparagine 40. Positions leucine 132–threonine 144 are enriched in pro residues. Residues leucine 132 to aspartate 215 form a disordered region. Residues glycine 155–proline 172 are compositionally biased toward acidic residues. Phosphothreonine is present on threonine 166. A phosphoserine mark is found at threonine 166 and glycine 167. A phosphothreonine mark is found at tyrosine 197 and proline 198. C2 domains are found at residues lysine 203–leucine 321, aspartate 360–proline 496, glycine 1136–arginine 1262, proline 1310–proline 1438, proline 1561–glycine 1679, and glycine 1795–serine 1943. Ca(2+)-binding residues include aspartate 1168, aspartate 1174, aspartate 1230, and aspartate 1232. Positions 1594, 1600, 1649, 1651, 1914, 1917, and 1920 each coordinate Ca(2+). The disordered stretch occupies residues serine 1995–aspartate 2017. The helical transmembrane segment at isoleucine 2047 to phenylalanine 2067 threads the bilayer. Residues proline 2068–serine 2080 are Extracellular-facing.

Belongs to the ferlin family. In terms of assembly, interacts with CACNA1S. Interacts with ANXA1; the interaction is Ca(2+)- and injury state-dependent. Interacts with ANXA2; the interaction is Ca(2+)- and injury state-dependent. Interacts with CACNA1S and PARVB. Interacts with TRIM72/MG53; interaction is required for transport to sites of cell injury during repair patch formation. Interacts with RIPOR2; this interaction occurs during early myogenic differentiation. Interacts with CAV3 and PARVB. Interacts with AHNAK; the interaction is direct and Ca(2+)-independent. Interacts with AHNAK2; the interaction is direct and Ca(2+)-independent. Ca(2+) is required as a cofactor. As to expression, expressed in skeletal muscle, myoblast, myotube and in the syncytiotrophoblast (STB) of the placenta (at protein level). Ubiquitous. Highly expressed in skeletal muscle. Also found in heart, brain, spleen, intestine, placenta and at lower levels in liver, lung, kidney and pancreas.

The protein resides in the cell membrane. The protein localises to the sarcolemma. It localises to the cytoplasmic vesicle membrane. Key calcium ion sensor involved in the Ca(2+)-triggered synaptic vesicle-plasma membrane fusion. Plays a role in the sarcolemma repair mechanism of both skeletal muscle and cardiomyocytes that permits rapid resealing of membranes disrupted by mechanical stress. This is Dysferlin (DYSF) from Homo sapiens (Human).